Consider the following 1408-residue polypeptide: Palladin (1408 aa).

A disordered region spans residues 69 to 229 (SKSPISLCET…SASQSPTADQ (161 aa)). Composition is skewed to polar residues over residues 149 to 169 (PNPSSKPKTAQQSKAGPQSQL) and 193 to 229 (RSPNGESSSPDSGYLSPKNQPSALMSASASQSPTADQ). A Phosphoserine modification is found at Ser-194. Ig-like C2-type domains lie at 278–367 (PRFI…AEVF) and 448–546 (PVFT…LVIT). 2 disulfides stabilise this stretch: Cys-299–Cys-351 and Cys-469–Cys-528. Residues 569-573 (FPPPP) are interaction with VASP. Disordered stretches follow at residues 631 to 660 (NGKAYGNKSPPTPTALLSPTKEPPPLLAKP) and 687 to 727 (PPGV…VPSE). Ser-639 carries the phosphoserine modification. Thr-642 carries the post-translational modification Phosphothreonine. Ser-648 bears the Phosphoserine mark. The segment at 653–683 (PPPLLAKPKLDPLKLQQLQNQVRLEQEACAW) is interaction with LASP1. Residues 683–713 (WPPAPPGVPCNSSSSGSSAPPSPPFPPPPPA) are interaction with SORBS2, SPIN90 and SRC. Residues 691-701 (PCNSSSSGSSA) show a composition bias toward low complexity. 3 positions are modified to phosphoserine: Ser-700, Ser-704, and Ser-744. A compositionally biased stretch (pro residues) spans 702–714 (PPSPPFPPPPPAF). Disordered regions lie at residues 758–854 (NLGP…RFGP), 882–904 (KGVTPAGFPKKSSRTARIASDEE), and 960–981 (ETAANQDAGAPRASVGGPLDGQ). Low complexity predominate over residues 765–779 (LPTPTSSPSSSSLPS). 3 stretches are compositionally biased toward pro residues: residues 780 to 797 (PLSPTPRPFGRAPGPPFV), 807 to 818 (SPSPPPPPPPVF), and 828 to 840 (DVFPLPPPPPPLP). An interaction with EPS8 region spans residues 782-842 (SPTPRPFGRA…PPPPPPLPSS (61 aa)). The segment at 807 to 842 (SPSPPPPPPPVFSPSAAYPVPDVFPLPPPPPPLPSS) is interaction with SORBS2, SPIN90, SRC and PFN1. The segment at 830-834 (FPLPP) is interaction with VASP. Ser-901 carries the phosphoserine modification. Ser-1004 and Ser-1009 each carry phosphoserine. An Ig-like C2-type 3 domain is found at 1026-1110 (PFFEMKLKHY…MAANPQGRVS (85 aa)). The segment at 1121 to 1150 (NQRGRSPRSPSGHPHARRPRSRSRDSGDEN) is disordered. Residues 1123-1133 (RGRSPRSPSGH) show a composition bias toward low complexity. 4 positions are modified to phosphoserine: Ser-1126, Ser-1129, Ser-1131, and Ser-1141. The residue at position 1143 (Ser-1143) is a Phosphoserine; by PKB/AKT1. At Ser-1146 the chain carries Phosphoserine. 2 consecutive Ig-like C2-type domains span residues 1160–1251 (PHFL…LVVA) and 1259–1349 (PVFM…ARLD). Interaction with EZR regions lie at residues 1162–1251 (FLQA…LVVA) and 1261–1351 (FMEK…LDVY). Cys-1181 and Cys-1233 are oxidised to a cystine. Phosphoserine is present on Ser-1377.

Belongs to the myotilin/palladin family. Interacts with EPS8. Interacts with LASP1. Interacts with VASP. Interacts with ACTN. Interacts with SORBS2. Interacts with PFN1. Interacts with LPP. Interacts with SPIN90. Interacts with SRC. Interacts with EZR. Interacts with RAI14. In terms of processing, phosphorylated predominantly on serines and, to a lesser extent, on tyrosines. Phosphorylation at Ser-1143 by PKB/AKT1 modulates cytoskeletal organization and cell motility. As to expression, detected in both muscle and non-muscle tissues and cells (at protein level). Isoform 3 is widely expressed, isoform 4 is particularly abundant in tissues rich in smooth muscle and in the cardiac muscle and isoform 1 is detected in heart.

The protein resides in the cytoplasm. The protein localises to the cytoskeleton. Its subcellular location is the cell junction. It is found in the focal adhesion. It localises to the myofibril. The protein resides in the sarcomere. The protein localises to the z line. Its subcellular location is the cell projection. It is found in the ruffle. It localises to the podosome. The protein resides in the lamellipodium. The protein localises to the axon. Its subcellular location is the growth cone. Cytoskeletal protein required for organization of normal actin cytoskeleton. Roles in establishing cell morphology, motility, cell adhesion and cell-extracellular matrix interactions in a variety of cell types. May function as a scaffolding molecule with the potential to influence both actin polymerization and the assembly of existing actin filaments into higher-order arrays. Binds to proteins that bind to either monomeric or filamentous actin. Localizes at sites where active actin remodeling takes place, such as lamellipodia and membrane ruffles. Different isoforms may have functional differences. Involved in the control of morphological and cytoskeletal changes associated with dendritic cell maturation. Involved in targeting ACTN to specific subcellular locations. May be required for the initiation of neural tube closure. This is Palladin (Palld) from Mus musculus (Mouse).